The sequence spans 190 residues: Glutathione peroxidase 2 (190 aa).

Selenocysteine 40 is a catalytic residue. Selenocysteine 40 is a non-standard amino acid (selenocysteine).

This sequence belongs to the glutathione peroxidase family. As to quaternary structure, homotetramer. In terms of tissue distribution, mucosal epithelium of the gastrointestinal tract.

The protein localises to the cytoplasm. Its subcellular location is the cytosol. It catalyses the reaction 2 glutathione + H2O2 = glutathione disulfide + 2 H2O. The enzyme catalyses a hydroperoxy polyunsaturated fatty acid + 2 glutathione = a hydroxy polyunsaturated fatty acid + glutathione disulfide + H2O. It carries out the reaction tert-butyl hydroperoxide + 2 glutathione = tert-butanol + glutathione disulfide + H2O. The catalysed reaction is cumene hydroperoxide + 2 glutathione = 2-phenylpropan-2-ol + glutathione disulfide + H2O. It catalyses the reaction (13S)-hydroperoxy-(9Z,11E)-octadecadienoate + 2 glutathione = (13S)-hydroxy-(9Z,11E)-octadecadienoate + glutathione disulfide + H2O. The enzyme catalyses (5S)-hydroperoxy-(6E,8Z,11Z,14Z)-eicosatetraenoate + 2 glutathione = (5S)-hydroxy-(6E,8Z,11Z,14Z)-eicosatetraenoate + glutathione disulfide + H2O. It carries out the reaction (12R)-hydroperoxy-(5Z,8Z,10E,14Z)-eicosatetraenoate + 2 glutathione = (12R)-hydroxy-(5Z,8Z,10E,14Z)-eicosatetraenoate + glutathione disulfide + H2O. The catalysed reaction is (15S)-hydroperoxy-(5Z,8Z,11Z,13E)-eicosatetraenoate + 2 glutathione = (15S)-hydroxy-(5Z,8Z,11Z,13E)-eicosatetraenoate + glutathione disulfide + H2O. In terms of biological role, catalyzes the reduction of hydroperoxides in a glutathione-dependent manner thus regulating cellular redox homeostasis. Can reduce small soluble hydroperoxide such as H2O2. Can reduce cumene hydroperoxide and tert-butyl hydroperoxide, as well as several fatty acid-derived hydroperoxides. Cannot reduce phosphatidycholine hydroperoxide. The sequence is that of Glutathione peroxidase 2 (Gpx2) from Rattus norvegicus (Rat).